Here is an 850-residue protein sequence, read N- to C-terminus: Ras GTPase-activating protein 2 (850 aa).

Residues 1-24 (MAAAAPAAAAASSEAPAASATAEP) are compositionally biased toward low complexity. The segment at 1–32 (MAAAAPAAAAASSEAPAASATAEPEAGDQDSR) is disordered. The residue at position 2 (Ala-2) is an N-acetylalanine. 2 consecutive C2 domains span residues 20 to 138 (ATAE…ETWF) and 149 to 289 (VQGK…QAWY). In terms of domain architecture, Ras-GAP spans 372–589 (DKLVPFATAV…IAVKKFLDEI (218 aa)). Ser-555 is subject to Phosphoserine. In terms of domain architecture, PH spans 604–706 (VHLKEGEMYK…WIDVLCRVSR (103 aa)). Residues 708–744 (NQNRLSFYHPSVYLNGNWLCCQETGENTLGCKPCTAG) form a Btk-type zinc finger. Positions 716, 727, 728, and 738 each coordinate Zn(2+). The segment at 825–850 (HEKYRKKRSSSAKYGSKENPIVGKAS) is disordered.

It localises to the cytoplasm. The protein resides in the perinuclear region. Its function is as follows. Inhibitory regulator of the Ras-cyclic AMP pathway. Binds inositol tetrakisphosphate (IP4). The sequence is that of Ras GTPase-activating protein 2 (RASA2) from Homo sapiens (Human).